The following is a 519-amino-acid chain: O-fucosyltransferase 31 (519 aa).

A helical; Signal-anchor for type II membrane protein transmembrane segment spans residues Ala18–Leu38. N-linked (GlcNAc...) asparagine glycosylation is present at Asn131. His302–Arg304 is a substrate binding site. N-linked (GlcNAc...) asparagine glycosylation is found at Asn373 and Asn474.

It belongs to the glycosyltransferase GT106 family.

Its subcellular location is the membrane. It participates in glycan metabolism. The polypeptide is O-fucosyltransferase 31 (Arabidopsis thaliana (Mouse-ear cress)).